Consider the following 210-residue polypeptide: Urease accessory protein UreG (210 aa).

Residue Gly14–Thr21 coordinates GTP.

It belongs to the SIMIBI class G3E GTPase family. UreG subfamily. In terms of assembly, homodimer. UreD, UreF and UreG form a complex that acts as a GTP-hydrolysis-dependent molecular chaperone, activating the urease apoprotein by helping to assemble the nickel containing metallocenter of UreC. The UreE protein probably delivers the nickel.

It localises to the cytoplasm. Its function is as follows. Facilitates the functional incorporation of the urease nickel metallocenter. This process requires GTP hydrolysis, probably effectuated by UreG. The sequence is that of Urease accessory protein UreG from Rhodopseudomonas palustris (strain BisB5).